An 865-amino-acid polypeptide reads, in one-letter code: LINE-1 type transposase domain-containing protein 1 (865 aa).

Serine 2 is modified (N-acetylserine). Serine 2 is modified (phosphoserine). Position 149 is a phosphothreonine (threonine 149). Serine 154 carries the post-translational modification Phosphoserine. The segment at 370–508 (EMKNLETQEE…EKKASRRQKE (139 aa)) is disordered. Composition is skewed to acidic residues over residues 376-440 (TQEE…EQTS) and 472-483 (SVEDSESEEEEE). 3 positions are modified to phosphoserine: serine 472, serine 476, and serine 478. The segment covering 498–508 (TEKKASRRQKE) has biased composition (basic and acidic residues). 3 positions are modified to phosphoserine: serine 518, serine 561, and serine 573. Residues 590 to 608 (EEKKHRTLHTEELTSKEAD) are compositionally biased toward basic and acidic residues. Residues 590–612 (EEKKHRTLHTEELTSKEADLTEE) form a disordered region. Phosphoserine is present on residues serine 640, serine 648, and serine 665. Residues 642 to 684 (VLEIENSVDDLSSRMDILEERIDSLEDQIEEFSKDTMQMTKQI) are a coiled coil.

Belongs to the transposase 22 family.

This Homo sapiens (Human) protein is LINE-1 type transposase domain-containing protein 1 (L1TD1).